Here is a 469-residue protein sequence, read N- to C-terminus: UDP-N-acetylmuramate--L-alanine ligase (469 aa).

Residue 119 to 125 coordinates ATP; that stretch reads GTHGKTT.

This sequence belongs to the MurCDEF family.

It is found in the cytoplasm. It catalyses the reaction UDP-N-acetyl-alpha-D-muramate + L-alanine + ATP = UDP-N-acetyl-alpha-D-muramoyl-L-alanine + ADP + phosphate + H(+). It participates in cell wall biogenesis; peptidoglycan biosynthesis. Cell wall formation. This chain is UDP-N-acetylmuramate--L-alanine ligase, found in Ruthia magnifica subsp. Calyptogena magnifica.